Here is a 264-residue protein sequence, read N- to C-terminus: 3-deoxy-manno-octulosonate cytidylyltransferase (264 aa).

Belongs to the KdsB family.

The protein localises to the cytoplasm. It catalyses the reaction 3-deoxy-alpha-D-manno-oct-2-ulosonate + CTP = CMP-3-deoxy-beta-D-manno-octulosonate + diphosphate. The protein operates within nucleotide-sugar biosynthesis; CMP-3-deoxy-D-manno-octulosonate biosynthesis; CMP-3-deoxy-D-manno-octulosonate from 3-deoxy-D-manno-octulosonate and CTP: step 1/1. It functions in the pathway bacterial outer membrane biogenesis; lipopolysaccharide biosynthesis. Functionally, activates KDO (a required 8-carbon sugar) for incorporation into bacterial lipopolysaccharide in Gram-negative bacteria. In Methylibium petroleiphilum (strain ATCC BAA-1232 / LMG 22953 / PM1), this protein is 3-deoxy-manno-octulosonate cytidylyltransferase.